The sequence spans 382 residues: Galactokinase (382 aa).

34 to 37 (EHTD) is a substrate binding site. 124–130 (GAGLSSS) is an ATP binding site. Mg(2+) is bound by residues Ser130 and Glu162. Asp174 (proton acceptor) is an active-site residue. Tyr223 serves as a coordination point for substrate.

It belongs to the GHMP kinase family. GalK subfamily.

It localises to the cytoplasm. It catalyses the reaction alpha-D-galactose + ATP = alpha-D-galactose 1-phosphate + ADP + H(+). It functions in the pathway carbohydrate metabolism; galactose metabolism. Catalyzes the transfer of the gamma-phosphate of ATP to D-galactose to form alpha-D-galactose-1-phosphate (Gal-1-P). In Shigella dysenteriae serotype 1 (strain Sd197), this protein is Galactokinase.